An 869-amino-acid polypeptide reads, in one-letter code: Bifunctional uridylyltransferase/uridylyl-removing enzyme (869 aa).

Positions 1–331 (MPTNLPALPM…FPSESQVTRV (331 aa)) are uridylyltransferase. The uridylyl-removing stretch occupies residues 332-688 (INERFVERQG…ARISPAGEGL (357 aa)). An HD domain is found at 450-572 (VDQHILMVVR…VGDERHLTAL (123 aa)). 2 consecutive ACT domains span residues 689–773 (QVAV…PSQG) and 800–869 (LLSL…ALEI).

This sequence belongs to the GlnD family. The cofactor is Mg(2+).

It carries out the reaction [protein-PII]-L-tyrosine + UTP = [protein-PII]-uridylyl-L-tyrosine + diphosphate. The enzyme catalyses [protein-PII]-uridylyl-L-tyrosine + H2O = [protein-PII]-L-tyrosine + UMP + H(+). With respect to regulation, uridylyltransferase (UTase) activity is inhibited by glutamine, while glutamine activates uridylyl-removing (UR) activity. Functionally, modifies, by uridylylation and deuridylylation, the PII regulatory proteins (GlnB and homologs), in response to the nitrogen status of the cell that GlnD senses through the glutamine level. Under low glutamine levels, catalyzes the conversion of the PII proteins and UTP to PII-UMP and PPi, while under higher glutamine levels, GlnD hydrolyzes PII-UMP to PII and UMP (deuridylylation). Thus, controls uridylylation state and activity of the PII proteins, and plays an important role in the regulation of nitrogen assimilation and metabolism. The sequence is that of Bifunctional uridylyltransferase/uridylyl-removing enzyme from Cupriavidus pinatubonensis (strain JMP 134 / LMG 1197) (Cupriavidus necator (strain JMP 134)).